Here is a 234-residue protein sequence, read N- to C-terminus: C2H2-type zinc-finger transcription factor clz7 (234 aa).

2 disordered regions span residues 45 to 99 (RPEG…SRVD) and 118 to 154 (SAQP…NGTA). 2 stretches are compositionally biased toward low complexity: residues 66–77 (SQSSNTSPTSES) and 140–154 (SSGT…NGTA). The C2H2-type 1; degenerate zinc-finger motif lies at 159–184 (NRCWDHGCNGKKFLNHSNLVRHRREN). The C2H2-type 2; degenerate zinc finger occupies 191-223 (FICPMCGAYFSRSTARNQHLEKKSCNRVRRYSN).

It belongs to the GLI C2H2-type zinc-finger protein family.

It is found in the nucleus. Transcription factor that probably regulates the expression of the gene cluster that mediates the biosynthesis of squalestatin S1 (SQS1, also known as zaragozic acid A), a heavily oxidized fungal polyketide that offers potent cholesterol lowering activity by targeting squalene synthase (SS). In Cochliobolus lunatus (Filamentous fungus), this protein is C2H2-type zinc-finger transcription factor clz7.